The sequence spans 333 residues: Ketol-acid reductoisomerase (NADP(+)) (333 aa).

The KARI N-terminal Rossmann domain occupies 1 to 171 (MSNDTQPKIA…GGARANIIKT (171 aa)). Residues 14-17 (YGSQ), arginine 37, threonine 42, and 72-75 (DMVQ) contribute to the NADP(+) site. Histidine 97 is an active-site residue. Residue glycine 123 coordinates NADP(+). The KARI C-terminal knotted domain occupies 172–317 (TFKEETETDL…KKLRAKMVWL (146 aa)). The Mg(2+) site is built by aspartate 180, glutamate 184, glutamate 216, and glutamate 220. Residue serine 241 participates in substrate binding.

The protein belongs to the ketol-acid reductoisomerase family. The cofactor is Mg(2+).

It carries out the reaction (2R)-2,3-dihydroxy-3-methylbutanoate + NADP(+) = (2S)-2-acetolactate + NADPH + H(+). It catalyses the reaction (2R,3R)-2,3-dihydroxy-3-methylpentanoate + NADP(+) = (S)-2-ethyl-2-hydroxy-3-oxobutanoate + NADPH + H(+). The protein operates within amino-acid biosynthesis; L-isoleucine biosynthesis; L-isoleucine from 2-oxobutanoate: step 2/4. It functions in the pathway amino-acid biosynthesis; L-valine biosynthesis; L-valine from pyruvate: step 2/4. In terms of biological role, involved in the biosynthesis of branched-chain amino acids (BCAA). Catalyzes an alkyl-migration followed by a ketol-acid reduction of (S)-2-acetolactate (S2AL) to yield (R)-2,3-dihydroxy-isovalerate. In the isomerase reaction, S2AL is rearranged via a Mg-dependent methyl migration to produce 3-hydroxy-3-methyl-2-ketobutyrate (HMKB). In the reductase reaction, this 2-ketoacid undergoes a metal-dependent reduction by NADPH to yield (R)-2,3-dihydroxy-isovalerate. This Xanthomonas euvesicatoria pv. vesicatoria (strain 85-10) (Xanthomonas campestris pv. vesicatoria) protein is Ketol-acid reductoisomerase (NADP(+)).